We begin with the raw amino-acid sequence, 160 residues long: Protein CrtK (160 aa).

A run of 5 helical transmembrane segments spans residues 3 to 23 (LTLF…GAIF), 37 to 57 (WVPP…LMSI), 76 to 96 (LAFW…FFGL), 101 to 121 (GGML…VLFW), and 129 to 149 (LMFV…FSVW).

Belongs to the TspO/BZRP family.

The protein resides in the cell inner membrane. It participates in carotenoid biosynthesis; spheroidene biosynthesis. The chain is Protein CrtK (crtK) from Rhodobacter capsulatus (strain ATCC BAA-309 / NBRC 16581 / SB1003).